A 331-amino-acid chain; its full sequence is tRNA-cytidine(32) 2-sulfurtransferase (331 aa).

The tract at residues 1 to 31 (MNAPHMNDTTADAATLDATAAPAGRPALTRR) is disordered. Residues 8-23 (DTTADAATLDATAAPA) show a composition bias toward low complexity. The short motif at 71–76 (SGGKDS) is the PP-loop motif element. Cys-146, Cys-149, and Cys-237 together coordinate [4Fe-4S] cluster.

This sequence belongs to the TtcA family. Homodimer. Requires Mg(2+) as cofactor. [4Fe-4S] cluster is required as a cofactor.

Its subcellular location is the cytoplasm. It carries out the reaction cytidine(32) in tRNA + S-sulfanyl-L-cysteinyl-[cysteine desulfurase] + AH2 + ATP = 2-thiocytidine(32) in tRNA + L-cysteinyl-[cysteine desulfurase] + A + AMP + diphosphate + H(+). It functions in the pathway tRNA modification. Catalyzes the ATP-dependent 2-thiolation of cytidine in position 32 of tRNA, to form 2-thiocytidine (s(2)C32). The sulfur atoms are provided by the cysteine/cysteine desulfurase (IscS) system. The sequence is that of tRNA-cytidine(32) 2-sulfurtransferase from Burkholderia lata (strain ATCC 17760 / DSM 23089 / LMG 22485 / NCIMB 9086 / R18194 / 383).